A 130-amino-acid chain; its full sequence is Small ribosomal subunit protein uS9 (130 aa).

Residues 109–130 (RKKERKKYGQRAARARYQYSKR) form a disordered region.

The protein belongs to the universal ribosomal protein uS9 family.

In Nitratidesulfovibrio vulgaris (strain DSM 19637 / Miyazaki F) (Desulfovibrio vulgaris), this protein is Small ribosomal subunit protein uS9.